The sequence spans 736 residues: Factor of DNA methylation 4 (736 aa).

2 stretches are compositionally biased toward basic and acidic residues: residues 80 to 90 and 144 to 167; these read RKYLRPRERPR and DSGRSGEERLKFSDKPDPFFSNED. The segment at 80-167 is disordered; that stretch reads RKYLRPRERP…KPDPFFSNED (88 aa). Positions 360-597 form a coiled coil; the sequence is TLVSNLENTL…RSMRELTTRA (238 aa).

Its function is as follows. Acts in association with FDM3 and FDM5 for RNA-directed DNA methylation (RdDM). The chain is Factor of DNA methylation 4 from Arabidopsis thaliana (Mouse-ear cress).